The following is a 131-amino-acid chain: Maturin (131 aa).

Tyrosine 34 is modified (phosphotyrosine). The segment covering 107 to 120 (FEEYSADVEEEEPE) has biased composition (acidic residues). The segment at 107 to 131 (FEEYSADVEEEEPEADHPQMGVSQQ) is disordered.

This sequence belongs to the MTURN family. In terms of processing, phosphorylation at Tyr-34 is essential for its ability to promote megakaryocyte differentiation. In terms of tissue distribution, expressed in the thymus, bone marrow and spleen.

The protein localises to the cytoplasm. In terms of biological role, promotes megakaryocyte differentiation by enhancing ERK and JNK signaling as well as up-regulating RUNX1 and FLI1 expression. Represses NF-kappa-B transcriptional activity by inhibiting phosphorylation of RELA at 'Ser- 536'. May be involved in early neuronal development. The sequence is that of Maturin (Mturn) from Mus musculus (Mouse).